A 65-amino-acid polypeptide reads, in one-letter code: MPKMKTKKSAAKRFQVRGSGSIKRGQAFKRHILTKKTTKNKRQLRGSAAVHETNIASVKAMMPFA.

Positions 1 to 15 (MPKMKTKKSAAKRFQ) are enriched in basic residues. The disordered stretch occupies residues 1–26 (MPKMKTKKSAAKRFQVRGSGSIKRGQ).

It belongs to the bacterial ribosomal protein bL35 family.

In Bordetella avium (strain 197N), this protein is Large ribosomal subunit protein bL35.